Here is a 103-residue protein sequence, read N- to C-terminus: Large ribosomal subunit protein bL21 (103 aa).

This sequence belongs to the bacterial ribosomal protein bL21 family. Part of the 50S ribosomal subunit. Contacts protein L20.

Functionally, this protein binds to 23S rRNA in the presence of protein L20. The polypeptide is Large ribosomal subunit protein bL21 (Acinetobacter baylyi (strain ATCC 33305 / BD413 / ADP1)).